The chain runs to 1073 residues: ATP-dependent helicase/deoxyribonuclease subunit B (1073 aa).

It belongs to the helicase family. AddB/RexB type 2 subfamily. In terms of assembly, heterodimer of AddA and RexB. Mg(2+) is required as a cofactor.

Functionally, the heterodimer acts as both an ATP-dependent DNA helicase and an ATP-dependent, dual-direction single-stranded exonuclease. Recognizes the chi site generating a DNA molecule suitable for the initiation of homologous recombination. This subunit has 5' -&gt; 3' nuclease activity but not helicase activity. The sequence is that of ATP-dependent helicase/deoxyribonuclease subunit B from Streptococcus equi subsp. zooepidemicus (strain MGCS10565).